Reading from the N-terminus, the 573-residue chain is Myrcene synthase TPS5FN (573 aa).

Residues R286, D323, D327, R464, and D467 each coordinate (2E)-geranyl diphosphate. Residues D323 and D327 each contribute to the Mg(2+) site. Residues 323 to 327 (DDIFD) carry the DDXXD motif motif. Mg(2+) is bound by residues D467, T471, and E475.

The protein belongs to the terpene synthase family. Tpsb subfamily. Requires Mg(2+) as cofactor. It depends on Mn(2+) as a cofactor. As to expression, expressed in glandular trichomes two to four weeks after flowering onset.

It catalyses the reaction (2E)-geranyl diphosphate = beta-myrcene + diphosphate. It carries out the reaction (2E)-geranyl diphosphate = (1R,5R)-alpha-pinene + diphosphate. The enzyme catalyses (2E)-geranyl diphosphate = sabinene + diphosphate. The catalysed reaction is (2E)-geranyl diphosphate = (4S)-limonene + diphosphate. It catalyses the reaction (2E)-geranyl diphosphate = terpinolene + diphosphate. It carries out the reaction (2E)-geranyl diphosphate = camphene + diphosphate. It participates in secondary metabolite biosynthesis; terpenoid biosynthesis. Functionally, involved in monoterpene (C10) olefins biosynthesis, constituants of cannabinoids and terpenoids-rich resins. Catalyzes mainly the conversion of (2E)-geranyl diphosphate to beta-myrcene, and also produces minor products such as alpha-pinene, camphene, sabinene, limonene and terpinolene. This Cannabis sativa (Hemp) protein is Myrcene synthase TPS5FN.